Consider the following 206-residue polypeptide: Alpha-1-acid glycoprotein 3 (206 aa).

The first 18 residues, 1 to 18 (MELHTVLIMLSLLPLLEA), serve as a signal peptide directing secretion. N33, N75, and N103 each carry an N-linked (GlcNAc...) asparagine glycan. The cysteines at positions 90 and 183 are disulfide-linked. Positions 187-206 (EKKHLELEKETKKDPEESQA) are disordered.

The protein belongs to the calycin superfamily. Lipocalin family.

The protein resides in the secreted. Functions as a transport protein in the blood stream. Binds various ligands in the interior of its beta-barrel domain. Appears to function in modulating the activity of the immune system during the acute-phase reaction. The sequence is that of Alpha-1-acid glycoprotein 3 (Orm3) from Mus musculus (Mouse).